A 362-amino-acid chain; its full sequence is uncharacterized protein (362 aa).

Residues 314 to 323 are compositionally biased toward basic and acidic residues; it reads GEEKEPKQES. Positions 314–362 are disordered; that stretch reads GEEKEPKQESQEQLFNPFTIDEMLTEEQQQQQEEENNATEEEGDTVKLG. A compositionally biased stretch (acidic residues) spans 345–356; that stretch reads QEEENNATEEEG.

This is an uncharacterized protein from Acidianus two-tailed virus (ATV).